A 200-amino-acid polypeptide reads, in one-letter code: Glutathione peroxidase 1 (200 aa).

Position 31 is a phosphoserine (Ser-31). Residue Sec-46 is part of the active site. A non-standard amino acid (selenocysteine) is located at residue Sec-46. An N6-acetyllysine; alternate mark is found at Lys-85 and Lys-111. Residues Lys-85 and Lys-111 each carry the N6-succinyllysine; alternate modification. N6-acetyllysine is present on Lys-118. Residue Lys-145 is modified to N6-acetyllysine; alternate. Lys-145 is subject to N6-succinyllysine; alternate. Position 194 is a phosphoserine (Ser-194).

This sequence belongs to the glutathione peroxidase family. As to quaternary structure, homotetramer. Interacts with MIEN1. During periods of oxidative stress, Sec-46 may react with a superoxide radical, irreversibly lose hydroselenide and be converted to dehydroalanine.

It is found in the cytoplasm. The protein resides in the mitochondrion. The catalysed reaction is 2 glutathione + H2O2 = glutathione disulfide + 2 H2O. It carries out the reaction a hydroperoxy polyunsaturated fatty acid + 2 glutathione = a hydroxy polyunsaturated fatty acid + glutathione disulfide + H2O. The enzyme catalyses tert-butyl hydroperoxide + 2 glutathione = tert-butanol + glutathione disulfide + H2O. It catalyses the reaction cumene hydroperoxide + 2 glutathione = 2-phenylpropan-2-ol + glutathione disulfide + H2O. The catalysed reaction is (13S)-hydroperoxy-(9Z,11E)-octadecadienoate + 2 glutathione = (13S)-hydroxy-(9Z,11E)-octadecadienoate + glutathione disulfide + H2O. It carries out the reaction (9S)-hydroperoxy-(10E,12Z)-octadecadienoate + 2 glutathione = (9S)-hydroxy-(10E,12Z)-octadecadienoate + glutathione disulfide + H2O. The enzyme catalyses (5S)-hydroperoxy-(6E,8Z,11Z,14Z)-eicosatetraenoate + 2 glutathione = (5S)-hydroxy-(6E,8Z,11Z,14Z)-eicosatetraenoate + glutathione disulfide + H2O. It catalyses the reaction (12S)-hydroperoxy-(5Z,8Z,10E,14Z)-eicosatetraenoate + 2 glutathione = (12S)-hydroxy-(5Z,8Z,10E,14Z)-eicosatetraenoate + glutathione disulfide + H2O. The catalysed reaction is (12R)-hydroperoxy-(5Z,8Z,10E,14Z)-eicosatetraenoate + 2 glutathione = (12R)-hydroxy-(5Z,8Z,10E,14Z)-eicosatetraenoate + glutathione disulfide + H2O. It carries out the reaction (15S)-hydroperoxy-(5Z,8Z,11Z,13E)-eicosatetraenoate + 2 glutathione = (15S)-hydroxy-(5Z,8Z,11Z,13E)-eicosatetraenoate + glutathione disulfide + H2O. The enzyme catalyses (5S)-hydroperoxy-(6E,8Z,11Z,14Z,17Z)-eicosapentaenoate + 2 glutathione = (5S)-hydroxy-(6E,8Z,11Z,14Z,17Z)-eicosapentaenoate + glutathione disulfide + H2O. It catalyses the reaction (12S)-hydroperoxy-(5Z,8Z,10E,14Z,17Z)-eicosapentaenoate + 2 glutathione = (12S)-hydroxy-(5Z,8Z,10E,14Z,17Z)-eicosapentaenoate + glutathione disulfide + H2O. The catalysed reaction is (15S)-hydroperoxy-(5Z,8Z,11Z,13E,17Z)-eicosapentaenoate + 2 glutathione = (15S)-hydroxy-(5Z,8Z,11Z,13E,17Z)-eicosapentaenoate + glutathione disulfide + H2O. It carries out the reaction (15S)-hydroperoxy-(11Z,13E)-eicosadienoate + 2 glutathione = (15S)-hydroxy-(11Z,13E)-eicosadienoate + glutathione disulfide + H2O. The enzyme catalyses (17S)-hydroperoxy-(4Z,7Z,10Z,13Z,15E,19Z)-docosahexaenoate + 2 glutathione = (17S)-hydroxy-(4Z,7Z,10Z,13Z,15E,19Z)-docosahexaenoate + glutathione disulfide + H2O. In terms of biological role, catalyzes the reduction of hydroperoxides in a glutathione-dependent manner thus regulating cellular redox homeostasis. Can reduce small soluble hydroperoxides such as H2O2, cumene hydroperoxide and tert-butyl hydroperoxide, as well as several fatty acid-derived hydroperoxides. In platelets catalyzes the reduction of 12-hydroperoxyeicosatetraenoic acid, the primary product of the arachidonate 12-lipoxygenase pathway. In Oryctolagus cuniculus (Rabbit), this protein is Glutathione peroxidase 1 (GPX1).